We begin with the raw amino-acid sequence, 352 residues long: Quinolinate synthase (352 aa).

His-48 and Ser-69 together coordinate iminosuccinate. Cys-114 provides a ligand contact to [4Fe-4S] cluster. Iminosuccinate is bound by residues Tyr-140–Asn-142 and Ser-157. Cys-201 lines the [4Fe-4S] cluster pocket. Iminosuccinate is bound by residues His-227–Glu-229 and Thr-244. Cys-298 contributes to the [4Fe-4S] cluster binding site.

This sequence belongs to the quinolinate synthase family. Type 1 subfamily. [4Fe-4S] cluster is required as a cofactor.

The protein resides in the cytoplasm. The catalysed reaction is iminosuccinate + dihydroxyacetone phosphate = quinolinate + phosphate + 2 H2O + H(+). The protein operates within cofactor biosynthesis; NAD(+) biosynthesis; quinolinate from iminoaspartate: step 1/1. Its function is as follows. Catalyzes the condensation of iminoaspartate with dihydroxyacetone phosphate to form quinolinate. The sequence is that of Quinolinate synthase from Pseudomonas aeruginosa (strain UCBPP-PA14).